Reading from the N-terminus, the 476-residue chain is Glutathione synthetase (476 aa).

Arg117 is a substrate binding site. Glu137 contributes to the ATP binding site. Residues Glu137 and Asn139 each coordinate Mg(2+). Residues Ile141–Ser144, Glu211–Asn213, Gln217, and Arg267–Tyr270 each bind substrate. Residues Lys308, Lys367–Asn376, Tyr378, Met400–Ile403, and Glu426 contribute to the ATP site. Glu371 provides a ligand contact to Mg(2+). Residue Arg452 participates in substrate binding. Residues Lys454 and Glu460 each contribute to the ATP site. Residue Val463–Ala464 participates in substrate binding.

The protein belongs to the eukaryotic GSH synthase family. Homodimer. It depends on Mg(2+) as a cofactor.

It carries out the reaction gamma-L-glutamyl-L-cysteine + glycine + ATP = glutathione + ADP + phosphate + H(+). The protein operates within sulfur metabolism; glutathione biosynthesis; glutathione from L-cysteine and L-glutamate: step 2/2. The chain is Glutathione synthetase (gshB) from Dictyostelium discoideum (Social amoeba).